The primary structure comprises 458 residues: Hepatocyte nuclear factor 3-beta (458 aa).

A transactivation domain 1 region spans residues 14–93 (DWSSYYAEPE…AGAMAGMSGS (80 aa)). The Nuclear localization signal motif lies at 106–113 (LSPSLSPL). Phosphothreonine; by PKB/AKT1 is present on threonine 156. The segment at residues 159–252 (KPPYSYISLI…ENGCYLRRQK (94 aa)) is a DNA-binding region (fork-head). 2 positions are modified to phosphoserine: serine 212 and serine 283. The interval 286-365 (QLGEAAGSAS…PGLPPEAHLK (80 aa)) is disordered. Residues 294–310 (ASETPAGTESPHSSASP) are compositionally biased toward polar residues. The residue at position 301 (threonine 301) is a Phosphothreonine. Residues serine 303, serine 306, serine 307, and serine 309 each carry the phosphoserine modification. Residues 339–352 (PGQQQQAAAHLLGP) are compositionally biased toward low complexity. The segment at 361-458 (EAHLKPEHHY…VYSRPIMNSS (98 aa)) is transactivation domain 2. A phosphoserine mark is found at serine 437 and serine 458.

In terms of assembly, binds DNA as a monomer. Binds TLE1. Interacts with FOXA1 and FOXA3. Interacts with PRKDC. Interacts with AKT1. Interacts with TET1; this interaction may recruit TET1 to specific genomic loci to mediate their demethylation. Post-translationally, phosphorylation on Thr-156 abolishes binding to target promoters and subsequent transcription activation upon insulin stimulation. As to expression, liver.

It is found in the nucleus. It localises to the cytoplasm. Functionally, transcription factor that is involved in embryonic development, establishment of tissue-specific gene expression and regulation of gene expression in differentiated tissues. Is thought to act as a 'pioneer' factor opening the compacted chromatin for other proteins through interactions with nucleosomal core histones and thereby replacing linker histones at target enhancer and/or promoter sites. Binds DNA with the consensus sequence 5'-[AC]A[AT]T[AG]TT[GT][AG][CT]T[CT]-3'. In embryonic development is required for notochord formation. Involved in the development of multiple endoderm-derived organ systems such as the liver, pancreas and lungs; FOXA1 and FOXA2 seem to have at least in part redundant roles. Originally described as a transcription activator for a number of liver genes such as AFP, albumin, tyrosine aminotransferase, PEPCK, etc. Interacts with the cis-acting regulatory regions of these genes. Involved in glucose homeostasis; regulates the expression of genes important for glucose sensing in pancreatic beta-cells and glucose homeostasis. Involved in regulation of fat metabolism. Acts synergistically with ONECUT1 to activate transcription of female-specific CYP2C12; the function is inhibited by growth hormone-activated STAT5B. Acts synergistically with HNF4A to activate transcription of APOA1. This chain is Hepatocyte nuclear factor 3-beta (Foxa2), found in Rattus norvegicus (Rat).